Reading from the N-terminus, the 348-residue chain is Probable dual-specificity RNA methyltransferase RlmN (348 aa).

The active-site Proton acceptor is the E93. Positions 99-333 (TEKRLTACLS…VSFRKSRGLD (235 aa)) constitute a Radical SAM core domain. An intrachain disulfide couples C106 to C338. The [4Fe-4S] cluster site is built by C113, C117, and C120. Residues 160 to 161 (GE), S190, 219 to 221 (SLH), and N295 contribute to the S-adenosyl-L-methionine site. The S-methylcysteine intermediate role is filled by C338.

It belongs to the radical SAM superfamily. RlmN family. Requires [4Fe-4S] cluster as cofactor.

It localises to the cytoplasm. It catalyses the reaction adenosine(2503) in 23S rRNA + 2 reduced [2Fe-2S]-[ferredoxin] + 2 S-adenosyl-L-methionine = 2-methyladenosine(2503) in 23S rRNA + 5'-deoxyadenosine + L-methionine + 2 oxidized [2Fe-2S]-[ferredoxin] + S-adenosyl-L-homocysteine. The enzyme catalyses adenosine(37) in tRNA + 2 reduced [2Fe-2S]-[ferredoxin] + 2 S-adenosyl-L-methionine = 2-methyladenosine(37) in tRNA + 5'-deoxyadenosine + L-methionine + 2 oxidized [2Fe-2S]-[ferredoxin] + S-adenosyl-L-homocysteine. In terms of biological role, specifically methylates position 2 of adenine 2503 in 23S rRNA and position 2 of adenine 37 in tRNAs. The protein is Probable dual-specificity RNA methyltransferase RlmN of Prochlorococcus marinus (strain MIT 9312).